The primary structure comprises 321 residues: D-alanine--D-alanine ligase (321 aa).

Residues 121-315 form the ATP-grasp domain; the sequence is RSWFLTNNIN…FVNLIEEILK (195 aa). 148-199 contributes to the ATP binding site; that stretch reads IKRPYVIKPFTQGSSIGVEVIFEEDDFNFANYDFPYGDEVIIEKYIKGRELQ. Positions 268, 282, and 284 each coordinate Mg(2+).

It belongs to the D-alanine--D-alanine ligase family. Mg(2+) is required as a cofactor. Requires Mn(2+) as cofactor.

The protein localises to the cytoplasm. The catalysed reaction is 2 D-alanine + ATP = D-alanyl-D-alanine + ADP + phosphate + H(+). The protein operates within cell wall biogenesis; peptidoglycan biosynthesis. Functionally, cell wall formation. This chain is D-alanine--D-alanine ligase, found in Rickettsia bellii (strain RML369-C).